A 196-amino-acid polypeptide reads, in one-letter code: uncharacterized protein (196 aa).

S-adenosyl-L-methionine contacts are provided by residues 44–46 (TTA), Gly80, Val100, and 107–109 (PSL).

It belongs to the class IV-like SAM-binding methyltransferase superfamily. RNA methyltransferase TrmH family.

This is an uncharacterized protein from Serratia marcescens.